Here is a 729-residue protein sequence, read N- to C-terminus: Ran-binding protein 9 (729 aa).

Residues 1–11 are compositionally biased toward pro residues; that stretch reads MSGQPPPPPPQ. The tract at residues 1–137 is disordered; it reads MSGQPPPPPP…SAAAPFPHGD (137 aa). Low complexity predominate over residues 27-49; the sequence is LAPVSGVVLPAPPAVSAGSSPAG. The segment covering 50 to 60 has biased composition (gly residues); the sequence is SPGGGAGGEGL. Over residues 70–93 the composition is skewed to pro residues; sequence HPPPPPPPATAAPPPPPPPPPPPA. Residues 107-126 show a composition bias toward low complexity; sequence GLAAGPGPAGGAPTPALVAG. The B30.2/SPRY domain occupies 147–334; the sequence is LQRRLKRLYP…VDANFGQHPF (188 aa). Residues 365–397 enclose the LisH domain; it reads WQTMIQKMVSSYLVHHGYCATAEAFARSTDQTV. The segment at 401 to 407 is interaction with CALB1; that stretch reads LASIKNR. A CTLH domain is found at 403-460; the sequence is SIKNRQRIQKLVLAGRMGEAIETTQQLYPSLLERNPNLLFTLKVRQFIEMVNGTDSEV. Residue Lys405 is modified to N6-acetyllysine. The interval 461 to 489 is disordered; the sequence is RCLGGRSPKSQDSYPVSPRPFSSPSMSPS. Positions 473–489 are enriched in low complexity; sequence SYPVSPRPFSSPSMSPS. Ser477 and Ser487 each carry phosphoserine. The tract at residues 615-729 is interaction with FMR1; the sequence is AAIERMIHFG…AFATVEDYLH (115 aa).

Belongs to the RANBP9/10 family. As to quaternary structure, part of a complex consisting of RANBP9, MKLN1 and GID8. Identified in the CTLH complex that contains GID4, RANBP9 and/or RANBP10, MKLN1, MAEA, RMND5A (or alternatively its paralog RMND5B), GID8, ARMC8, WDR26 and YPEL5. Within this complex, MAEA, RMND5A (or alternatively its paralog RMND5B), GID8, WDR26, and RANBP9 and/or RANBP10 form the catalytic core, while GID4, MKLN1, ARMC8 and YPEL5 have ancillary roles. Interacts with GTP-bound Ran, AR, CDC2L1/p110C, CALB1, S100A7, USP11, MKLN1, SOS1 or SOS2, GID8, and FMR1. Interacts with the Dyrk kinases HIPK2, DYRK1A, and DYRK1B. Interacts with TP73 isoform Alpha but not with TP53. Interacts with the HGF receptor MET and the integrins ITGB1 and ITGB2, but not with ITGAL. Part of a complex consisting of RANBP9, RAN, DYRK1B and COPS5. Directly interacts with RANBP10. Interacts with YPEL5. Interacts with DDX4. Interacts with NGFR. Interacts with TEX19. Phosphorylated in response to stress. Can be phosphorylated by the cleaved p110 form of CDC2L1 (p110C). In terms of processing, ubiquitinated. Polyubiquitination targets the protein for rapid degradation via the ubiquitin system. Can be deubiquitinated by USP11. As to expression, ubiquitously expressed, with highest levels in testes, placenta, heart, and muscle, and lowest levels in lung. Within the brain, expressed predominantly by neurons in the gray matter of cortex, the granular layer of cerebellum and the Purkinje cells.

It localises to the cytoplasm. The protein resides in the nucleus. Its subcellular location is the cell membrane. In terms of biological role, may act as scaffolding protein, and as adapter protein to couple membrane receptors to intracellular signaling pathways. Acts as a mediator of cell spreading and actin cytoskeleton rearrangement. Core component of the CTLH E3 ubiquitin-protein ligase complex that selectively accepts ubiquitin from UBE2H and mediates ubiquitination and subsequent proteasomal degradation of the transcription factor HBP1. May be involved in signaling of ITGB2/LFA-1 and other integrins. Enhances HGF-MET signaling by recruiting Sos and activating the Ras pathway. Enhances dihydrotestosterone-induced transactivation activity of AR, as well as dexamethasone-induced transactivation activity of NR3C1, but not affect estrogen-induced transactivation. Stabilizes TP73 isoform Alpha, probably by inhibiting its ubiquitination, and increases its proapoptotic activity. Inhibits the kinase activity of DYRK1A and DYRK1B. Inhibits FMR1 binding to RNA. The polypeptide is Ran-binding protein 9 (RANBP9) (Homo sapiens (Human)).